Reading from the N-terminus, the 120-residue chain is Non-specific lipid-transfer protein 6 (120 aa).

The N-terminal stretch at 1–26 (MARSMSLKLACVVVLCLLVDAPLAQG) is a signal peptide. 2 disulfides stabilise this stretch: Cys57/Cys102 and Cys77/Cys116.

The protein belongs to the plant LTP family. As to expression, specifically expressed in fiber cells.

Plant non-specific lipid-transfer proteins transfer phospholipids as well as galactolipids across membranes. May play a role in wax or cutin deposition in the cell walls of expanding epidermal cells and certain secretory tissues. This chain is Non-specific lipid-transfer protein 6 (LTP6), found in Gossypium hirsutum (Upland cotton).